A 443-amino-acid polypeptide reads, in one-letter code: Signal recognition particle 54 kDa protein (443 aa).

Residues Gly-107–Thr-114, Asp-189–Arg-193, and Thr-247–Asp-250 each bind GTP.

It belongs to the GTP-binding SRP family. SRP54 subfamily. Part of the signal recognition particle protein translocation system, which is composed of SRP and FtsY. Archaeal SRP consists of a 7S RNA molecule of 300 nucleotides and two protein subunits: SRP54 and SRP19.

The protein resides in the cytoplasm. The catalysed reaction is GTP + H2O = GDP + phosphate + H(+). Its function is as follows. Involved in targeting and insertion of nascent membrane proteins into the cytoplasmic membrane. Binds to the hydrophobic signal sequence of the ribosome-nascent chain (RNC) as it emerges from the ribosomes. The SRP-RNC complex is then targeted to the cytoplasmic membrane where it interacts with the SRP receptor FtsY. The protein is Signal recognition particle 54 kDa protein of Pyrococcus furiosus (strain ATCC 43587 / DSM 3638 / JCM 8422 / Vc1).